The chain runs to 48 residues: uncharacterized protein (48 aa).

The N-terminal stretch at Met-1–Ala-21 is a signal peptide.

This is an uncharacterized protein from Bacillus anthracis.